The sequence spans 65 residues: MGNTSITIEFTSKFWPYFTLIHMILTLISLLIIITIMIAILNKLSEHKTFCNNTLELGQMHQINT.

Topologically, residues 1–20 (MGNTSITIEFTSKFWPYFTL) are intravirion. Residues 6-15 (ITIEFTSKFW) form an interaction with host BCAP31 region. A helical; Signal-anchor for type II membrane protein transmembrane segment spans residues 21-44 (IHMILTLISLLIIITIMIAILNKL). The tract at residues 38-43 (IAILNK) is interaction with small-molecule inhibitor. At 45 to 65 (SEHKTFCNNTLELGQMHQINT) the chain is on the virion surface side. Asparagine 52 is a glycosylation site (N-linked (GlcNAc...) asparagine; by host).

Belongs to the orthopneumovirus small hydrophobic protein family. As to quaternary structure, homopentamer forming a funnel-like pore. Interacts with glycoprotein G; this interaction occurs on the surface of virion particles and infected cells. Interacts with host BCAP31 (via C-terminus); this interaction is direct. Post-translationally, four species of SH have been detected in infected cell cytoplasm: a 7.5 kDa non-glycosylated form (SH0), a 13-15 kDa form that contains one or two N-linked carbohydrate side chains of the high-mannose type (SHg), a 21-30 kDa polylactosaminoglycan-modified form of the protein (SHp), and the isoform generated by alternative translational initiation. Of these different forms, SH0 is by far the most abundant protein detected during virus infection. Tyrosine phosphorylated.

It is found in the virion membrane. The protein resides in the host cell membrane. Its subcellular location is the host Golgi apparatus membrane. The protein localises to the host endoplasmic reticulum membrane. Channel activity is inhibited by copper. Also inhibited by small-molecule pyronin B. In terms of biological role, viroporin that forms a homopentameric ion channel displaying low ion selectivity. May play a role in virus morphogenesis and pathogenicity at various stages of the viral life cycle. Accumulates at the membrane of the Golgi apparatus in infected cells and may facilitate virus release by modifying the secretory pathway. May enhance host membrane permeability and disrupt cellular ion homeostasis, which can be sensed as damage-associated molecular patterns/danger signals, triggering NLRP3 inflammasome activation and inflammatory immune response. Also inhibits host TNFA-mediated signaling pathway and may delay apoptosis, allowing time for the virus to replicate. The sequence is that of Small hydrophobic protein from Homo sapiens (Human).